A 628-amino-acid polypeptide reads, in one-letter code: Netrin-4 (628 aa).

The signal sequence occupies residues M1–G19. Residues C30–S261 enclose the Laminin N-terminal domain. N-linked (GlcNAc...) asparagine glycosylation is found at N56 and N163. Cystine bridges form between C262/C271, C264/C293, C295/C304, C307/C329, C332/C341, C334/C359, C362/C371, C374/C392, C395/C413, C397/C420, C422/C431, and C434/C446. Laminin EGF-like domains are found at residues C262 to T331, C332 to A394, and C395 to P448. N-linked (GlcNAc...) asparagine glycosylation is present at N353. Residue N483 is glycosylated (N-linked (GlcNAc...) asparagine). Cystine bridges form between C506–C576 and C520–C627. Residues C506 to C627 form the NTR domain.

In terms of assembly, may form a homodimer. As to expression, expressed in kidney, liver, heart, ovary, testis, retina, brain, olfactory bulb, and widely expressed in embryo.

The protein localises to the secreted. It is found in the extracellular space. Its subcellular location is the extracellular matrix. It localises to the basement membrane. Its function is as follows. May play an important role in neural, kidney and vascular development. Promotes neurite elongation from olfactory bulb explants. The protein is Netrin-4 (Ntn4) of Mus musculus (Mouse).